A 158-amino-acid polypeptide reads, in one-letter code: Ribosome maturation factor RimP (158 aa).

It belongs to the RimP family.

It localises to the cytoplasm. Required for maturation of 30S ribosomal subunits. This chain is Ribosome maturation factor RimP, found in Lactobacillus gasseri (strain ATCC 33323 / DSM 20243 / BCRC 14619 / CIP 102991 / JCM 1131 / KCTC 3163 / NCIMB 11718 / NCTC 13722 / AM63).